Consider the following 124-residue polypeptide: Mini zinc finger protein 4 (124 aa).

A ZF-HD dimerization-type; degenerate zinc finger spans residues 35-84 (YGECRRNHAARMGGHAVDGCREFLAEGEEGTGGALRCAACGCHRSFHRRV).

As to quaternary structure, homo- and heterodimers.

It is found in the cytoplasm. In terms of biological role, inhibits zinc finger homeodomain (ZHD) transcription factors, by interacting with them to prevent both their nuclear localization and their DNA-binding properties. In Oryza sativa subsp. japonica (Rice), this protein is Mini zinc finger protein 4 (MIF4).